Here is an 882-residue protein sequence, read N- to C-terminus: MNAPAKFSTSQIRSDFLAFFEGKGHTIVPSAPLVPGNDPTLLFTNSGMVQFKDVFLGAEKRSYVRAADVQRCLRAGGKHNDLDSVGYTARHHTFFEMLGNWSFGDYFKKDAIAWAWELLTQVWKLPADRLLVTVYHTDEEAFELWRDMIGIPESRIVRIGDNKGAPYASDNFWQMADTGPCGPCTEIFFDHGDHIAGGPPGSPDEDGDRFIEIWNLVFMQFDRQPDGTLVPLPAPCVDTGMGLERLAAILQHVHTNYEIDVFQALIGKASALTGIADLENKSLRVIADHIRACSFLIVDGVLPSNEGRGYVLRRIIRRALRHGWMLGVRQLFFSKMVPTLVELMGEAYPELVVAQETVARALLAEEERFAETLDAGMKIFDDVASRSQEIIPGADAFRLYDTYGFPVDLTADIARERGMRVDMEGFEFAMERQRETARAAGKFGGGVALPADLVATMAPTVFLGYEAQDADALKVVALLKQGRPVDRAEAGDEVIVFTDRTPFYAESGGQVGDSGQLSGTDISIEVADTQKFAGQFHGHVGRIAEGTLKLGDVLSGGIDVQRRGKTILNHSATHLLHAALREVLGTHVQQKGSLVAPDRLRFDFSHFQPITAEELAVIERKVNAEVRTNHSVEVHNMAMQEALDFGAMALFGEKYGERVRVLKMGGYSTELCGGTHVSRTGDIGLFKITSEGGVSSGVRRIEAVTGQGALDYVAEEERRLGEAASLFGGNSTEIVDKVRALTDRQKRLERELESLKAKLASGATADLGASAVDVAGVKVIAVRLEGFDAKALREAMDRLKQQLGDSVIVLAGAAGGKVALVAGVNGSPTGKVKAGELLGHIASQIGGKGGGRPDLAQGGGEDGPALATALQGVPSWVKQHLG.

4 residues coordinate Zn(2+): histidine 570, histidine 574, cysteine 672, and histidine 676.

The protein belongs to the class-II aminoacyl-tRNA synthetase family. Zn(2+) serves as cofactor.

The protein localises to the cytoplasm. The catalysed reaction is tRNA(Ala) + L-alanine + ATP = L-alanyl-tRNA(Ala) + AMP + diphosphate. In terms of biological role, catalyzes the attachment of alanine to tRNA(Ala) in a two-step reaction: alanine is first activated by ATP to form Ala-AMP and then transferred to the acceptor end of tRNA(Ala). Also edits incorrectly charged Ser-tRNA(Ala) and Gly-tRNA(Ala) via its editing domain. This is Alanine--tRNA ligase from Xanthomonas campestris pv. campestris (strain B100).